The primary structure comprises 938 residues: Isoleucine--tRNA ligase (938 aa).

The 'HIGH' region motif lies at 58–68; the sequence is PYANGSIHIGH. Lys-183 carries the N6-acetyllysine modification. Position 561 (Glu-561) interacts with L-isoleucyl-5'-AMP. Residues 602–606 carry the 'KMSKS' region motif; that stretch reads KMSKS. Lys-605 is a binding site for ATP. Positions 901, 904, 921, and 924 each coordinate Zn(2+).

This sequence belongs to the class-I aminoacyl-tRNA synthetase family. IleS type 1 subfamily. As to quaternary structure, monomer. It depends on Zn(2+) as a cofactor.

It is found in the cytoplasm. The enzyme catalyses tRNA(Ile) + L-isoleucine + ATP = L-isoleucyl-tRNA(Ile) + AMP + diphosphate. In terms of biological role, catalyzes the attachment of isoleucine to tRNA(Ile). As IleRS can inadvertently accommodate and process structurally similar amino acids such as valine, to avoid such errors it has two additional distinct tRNA(Ile)-dependent editing activities. One activity is designated as 'pretransfer' editing and involves the hydrolysis of activated Val-AMP. The other activity is designated 'posttransfer' editing and involves deacylation of mischarged Val-tRNA(Ile). This Shigella dysenteriae serotype 1 (strain Sd197) protein is Isoleucine--tRNA ligase.